We begin with the raw amino-acid sequence, 263 residues long: Mannose-specific lectin 2 (263 aa).

A signal peptide spans 1 to 24 (MAKSLVLSSLLLALLLAAPLASLA). Bulb-type lectin domains lie at 26–136 (NNVL…APNR) and 150–260 (RNVL…SSAS). Disulfide bonds link Cys-54-Cys-76 and Cys-178-Cys-203.

In terms of assembly, heterotetramer of 2 domain 1 and 2 domain 2 chains arranged as a dimer of domain 1/domain 2 heterodimers.

Functionally, mannose-specific lectin. Has weak agglutinating activity towards trypsin-treated erythrocytes from rabbit but not from human. This is Mannose-specific lectin 2 from Crocus vernus (Dutch crocus).